Reading from the N-terminus, the 304-residue chain is MSQDRLPQMVISIMLLANFDVSERCNIRPRSFDLIAKKGDNLVIIKVASHIDSVSADITWDLNLIARYLEATPLIVGERARDTDLERGVVYIRYGLFALNPETLYDYFVEGLSPMVYASPGGLYVRIKGDLLREVRERFRMSLGDLASHLGVSRRTISKYESGMGTTLDVAIKLEEIFNAPLVETIELLGYRTPEPEKHLESTPGDVLADLERMGMEIHAMRQAPFQALALFDRHTILTAYGTSQKIVKRASLIGNISQITKTFAMCVVTDYKKQKKIGKTLLIGEEHLHTLEDGSELIDMINE.

An HTH cro/C1-type domain is found at 132–189; the sequence is LREVRERFRMSLGDLASHLGVSRRTISKYESGMGTTLDVAIKLEEIFNAPLVETIELL. The segment at residues 143–162 is a DNA-binding region (H-T-H motif); that stretch reads LGDLASHLGVSRRTISKYES.

This Methanoculleus marisnigri (strain ATCC 35101 / DSM 1498 / JR1) protein is Putative HTH-type transcriptional regulatory protein Memar_2347.